The chain runs to 329 residues: Beta-ketoacyl-[acyl-carrier-protein] synthase III (329 aa).

Residues Cys-123 and His-256 contribute to the active site. Residues 257–261 (QANVR) form an ACP-binding region. Asn-286 is an active-site residue.

The protein belongs to the thiolase-like superfamily. FabH family. In terms of assembly, homodimer.

Its subcellular location is the cytoplasm. It carries out the reaction malonyl-[ACP] + acetyl-CoA + H(+) = 3-oxobutanoyl-[ACP] + CO2 + CoA. Its pathway is lipid metabolism; fatty acid biosynthesis. Functionally, catalyzes the condensation reaction of fatty acid synthesis by the addition to an acyl acceptor of two carbons from malonyl-ACP. Catalyzes the first condensation reaction which initiates fatty acid synthesis and may therefore play a role in governing the total rate of fatty acid production. Possesses both acetoacetyl-ACP synthase and acetyl transacylase activities. Its substrate specificity determines the biosynthesis of branched-chain and/or straight-chain of fatty acids. The sequence is that of Beta-ketoacyl-[acyl-carrier-protein] synthase III from Bordetella parapertussis (strain 12822 / ATCC BAA-587 / NCTC 13253).